The following is a 61-amino-acid chain: Small ribosomal subunit protein uS14B (61 aa).

Zn(2+) is bound by residues Cys24, Cys27, Cys40, and Cys43.

This sequence belongs to the universal ribosomal protein uS14 family. Zinc-binding uS14 subfamily. As to quaternary structure, part of the 30S ribosomal subunit. Contacts proteins S3 and S10. It depends on Zn(2+) as a cofactor.

In terms of biological role, binds 16S rRNA, required for the assembly of 30S particles and may also be responsible for determining the conformation of the 16S rRNA at the A site. The sequence is that of Small ribosomal subunit protein uS14B from Myxococcus xanthus (strain DK1622).